The primary structure comprises 324 residues: Quinolinate synthase (324 aa).

Iminosuccinate-binding residues include His44 and Ser62. Cys107 contributes to the [4Fe-4S] cluster binding site. Residues 133–135 and Ser150 each bind iminosuccinate; that span reads YVN. Residue Cys192 participates in [4Fe-4S] cluster binding. Residues 218–220 and Thr235 each bind iminosuccinate; that span reads HPE. Cys278 serves as a coordination point for [4Fe-4S] cluster.

This sequence belongs to the quinolinate synthase family. Type 2 subfamily. Requires [4Fe-4S] cluster as cofactor.

The protein resides in the cytoplasm. The catalysed reaction is iminosuccinate + dihydroxyacetone phosphate = quinolinate + phosphate + 2 H2O + H(+). It functions in the pathway cofactor biosynthesis; NAD(+) biosynthesis; quinolinate from iminoaspartate: step 1/1. Functionally, catalyzes the condensation of iminoaspartate with dihydroxyacetone phosphate to form quinolinate. The chain is Quinolinate synthase from Leptospira interrogans serogroup Icterohaemorrhagiae serovar copenhageni (strain Fiocruz L1-130).